We begin with the raw amino-acid sequence, 379 residues long: Queuine tRNA-ribosyltransferase (379 aa).

Asp-94 acts as the Proton acceptor in catalysis. Substrate contacts are provided by residues 94-98 (DSGGF), Asp-148, Gln-191, and Gly-218. The tract at residues 249-255 (GVGSPDS) is RNA binding. The active-site Nucleophile is the Asp-268. The RNA binding; important for wobble base 34 recognition stretch occupies residues 273-277 (TRIAR). Zn(2+)-binding residues include Cys-306, Cys-308, Cys-311, and His-337.

The protein belongs to the queuine tRNA-ribosyltransferase family. Homodimer. Within each dimer, one monomer is responsible for RNA recognition and catalysis, while the other monomer binds to the replacement base PreQ1. Zn(2+) serves as cofactor.

It catalyses the reaction 7-aminomethyl-7-carbaguanine + guanosine(34) in tRNA = 7-aminomethyl-7-carbaguanosine(34) in tRNA + guanine. It participates in tRNA modification; tRNA-queuosine biosynthesis. Catalyzes the base-exchange of a guanine (G) residue with the queuine precursor 7-aminomethyl-7-deazaguanine (PreQ1) at position 34 (anticodon wobble position) in tRNAs with GU(N) anticodons (tRNA-Asp, -Asn, -His and -Tyr). Catalysis occurs through a double-displacement mechanism. The nucleophile active site attacks the C1' of nucleotide 34 to detach the guanine base from the RNA, forming a covalent enzyme-RNA intermediate. The proton acceptor active site deprotonates the incoming PreQ1, allowing a nucleophilic attack on the C1' of the ribose to form the product. After dissociation, two additional enzymatic reactions on the tRNA convert PreQ1 to queuine (Q), resulting in the hypermodified nucleoside queuosine (7-(((4,5-cis-dihydroxy-2-cyclopenten-1-yl)amino)methyl)-7-deazaguanosine). This is Queuine tRNA-ribosyltransferase from Listeria monocytogenes serovar 1/2a (strain ATCC BAA-679 / EGD-e).